A 277-amino-acid chain; its full sequence is MELIEKHASFGGWQNVYRHYSQSLKCEMNVGVYLPPKAANEKLPVLYWLSGLTCNEQNFITKSGMQRYAAEHNIIVVAPDTSPRGSHVADADRYDLGQGAGFYLNATQAPWNEHYKMYDYIRNELPDLVMQHFPATTRKSISGHSMGGLGALVLALRNPDEYVSVSAFSPIVSPSQAPWGQQAFAAYLGENKDAWLDYDPVSLISQGQRVAEIMVDQGLSDDFYAEQLRTPNLEKICQEMNIKTLIRYHEGYDHSYYFVSSFIGEHIAYHANKLNMR.

Catalysis depends on charge relay system residues serine 145, aspartate 221, and histidine 254.

This sequence belongs to the esterase D family.

The enzyme catalyses S-formylglutathione + H2O = formate + glutathione + H(+). Its function is as follows. Serine hydrolase involved in the detoxification of formaldehyde. Hydrolyzes S-formylglutathione to glutathione and formate. The sequence is that of S-formylglutathione hydrolase FrmB (frmB) from Escherichia coli O9:H4 (strain HS).